The following is a 396-amino-acid chain: 1-deoxy-D-xylulose 5-phosphate reductoisomerase (396 aa).

NADPH is bound by residues Thr10, Gly11, Ser12, Ile13, Gly36, Lys37, Asn38, and Asn124. Residue Lys125 participates in 1-deoxy-D-xylulose 5-phosphate binding. Glu126 provides a ligand contact to NADPH. Asp150 is a Mn(2+) binding site. 4 residues coordinate 1-deoxy-D-xylulose 5-phosphate: Ser151, Glu152, Ser186, and His209. A Mn(2+)-binding site is contributed by Glu152. Gly215 is a binding site for NADPH. 1-deoxy-D-xylulose 5-phosphate-binding residues include Ser222, Asn227, Lys228, and Glu231. Glu231 serves as a coordination point for Mn(2+).

This sequence belongs to the DXR family. Mg(2+) serves as cofactor. Requires Mn(2+) as cofactor.

The catalysed reaction is 2-C-methyl-D-erythritol 4-phosphate + NADP(+) = 1-deoxy-D-xylulose 5-phosphate + NADPH + H(+). Its pathway is isoprenoid biosynthesis; isopentenyl diphosphate biosynthesis via DXP pathway; isopentenyl diphosphate from 1-deoxy-D-xylulose 5-phosphate: step 1/6. Functionally, catalyzes the NADPH-dependent rearrangement and reduction of 1-deoxy-D-xylulose-5-phosphate (DXP) to 2-C-methyl-D-erythritol 4-phosphate (MEP). The sequence is that of 1-deoxy-D-xylulose 5-phosphate reductoisomerase from Actinobacillus pleuropneumoniae serotype 5b (strain L20).